A 129-amino-acid chain; its full sequence is Small ribosomal subunit protein uS11 (129 aa).

Belongs to the universal ribosomal protein uS11 family. Part of the 30S ribosomal subunit. Interacts with proteins S7 and S18. Binds to IF-3.

Its function is as follows. Located on the platform of the 30S subunit, it bridges several disparate RNA helices of the 16S rRNA. Forms part of the Shine-Dalgarno cleft in the 70S ribosome. The sequence is that of Small ribosomal subunit protein uS11 from Serratia proteamaculans (strain 568).